The primary structure comprises 603 residues: Putative ankyrin repeat protein FPV162 (603 aa).

14 ANK repeats span residues 23–53 (FKDT…DINV), 57–87 (FKKT…NVNV), 91–120 (FEST…DPNT), 124–155 (NGQT…NVNA), 159–189 (KHNT…DVKI), 193–223 (DGIT…DVNA), 227–257 (EGNT…EVNA), 261–291 (VGDT…NVNA), 295–325 (ISVT…EVNS), 329–362 (YGRT…DIEA), 366–397 (IGGT…DINT), 401–428 (RDET…STNI), 432–467 (SNIT…DIKN), and 504–533 (NNMY…DIYL).

In Vertebrata (FPV), this protein is Putative ankyrin repeat protein FPV162.